The chain runs to 77 residues: U8-lycotoxin-Ls1v (77 aa).

An N-terminal signal peptide occupies residues 1–20; sequence MKLIIFTGLVLFGIVSLIEA. Residues 21–26 constitute a propeptide that is removed on maturation; the sequence is QAENEK.

The protein belongs to the neurotoxin 19 (CSTX) family. 08 (U8-Lctx) subfamily. In terms of processing, contains 4 disulfide bonds. Expressed by the venom gland.

The protein resides in the secreted. This Lycosa singoriensis (Wolf spider) protein is U8-lycotoxin-Ls1v.